We begin with the raw amino-acid sequence, 464 residues long: Cysteine--tRNA ligase (464 aa).

Cys32 provides a ligand contact to Zn(2+). The 'HIGH' region signature appears at Val34–His44. Residues Cys213, His238, and Glu242 each coordinate Zn(2+). The 'KMSKS' region motif lies at Lys270–Ser274. Lys273 serves as a coordination point for ATP.

The protein belongs to the class-I aminoacyl-tRNA synthetase family. In terms of assembly, monomer. Zn(2+) is required as a cofactor.

It is found in the cytoplasm. It carries out the reaction tRNA(Cys) + L-cysteine + ATP = L-cysteinyl-tRNA(Cys) + AMP + diphosphate. In Francisella tularensis subsp. tularensis (strain SCHU S4 / Schu 4), this protein is Cysteine--tRNA ligase.